We begin with the raw amino-acid sequence, 96 residues long: Protein RnfH (96 aa).

It belongs to the UPF0125 (RnfH) family.

The chain is Protein RnfH from Salmonella agona (strain SL483).